The sequence spans 103 residues: L-rhamnose mutarotase (103 aa).

Position 18 (Tyr-18) interacts with substrate. His-22 functions as the Proton donor in the catalytic mechanism. Residues Tyr-41 and 76–77 contribute to the substrate site; that span reads WW.

It belongs to the rhamnose mutarotase family. As to quaternary structure, homodimer.

It is found in the cytoplasm. The enzyme catalyses alpha-L-rhamnose = beta-L-rhamnose. It participates in carbohydrate metabolism; L-rhamnose metabolism. Involved in the anomeric conversion of L-rhamnose. The polypeptide is L-rhamnose mutarotase (Enterococcus faecalis (strain ATCC 700802 / V583)).